Consider the following 603-residue polypeptide: Elongation factor 4 (603 aa).

Positions 7-189 (VRIRNFCIIA…AVVERIPPPP (183 aa)) constitute a tr-type G domain. GTP-binding positions include 19 to 24 (DHGKST) and 136 to 139 (NKID).

It belongs to the TRAFAC class translation factor GTPase superfamily. Classic translation factor GTPase family. LepA subfamily.

The protein resides in the cell inner membrane. The catalysed reaction is GTP + H2O = GDP + phosphate + H(+). Required for accurate and efficient protein synthesis under certain stress conditions. May act as a fidelity factor of the translation reaction, by catalyzing a one-codon backward translocation of tRNAs on improperly translocated ribosomes. Back-translocation proceeds from a post-translocation (POST) complex to a pre-translocation (PRE) complex, thus giving elongation factor G a second chance to translocate the tRNAs correctly. Binds to ribosomes in a GTP-dependent manner. This is Elongation factor 4 from Trichormus variabilis (strain ATCC 29413 / PCC 7937) (Anabaena variabilis).